The sequence spans 295 residues: Taste receptor type 2 member 120 (295 aa).

Topologically, residues 1 to 5 (MNLVE) are extracellular. A helical membrane pass occupies residues 6–26 (WIVTIIMMTEFLLGNCANVFI). Residues 27–45 (TIVNFIDCVKRRKISSADR) lie on the Cytoplasmic side of the membrane. The helical transmembrane segment at 46 to 66 (IITAIAIFRIGLLWAMLTNWH) threads the bilayer. The Extracellular portion of the chain corresponds to 67 to 80 (SHVFTPDTDNLQMR). The helical transmembrane segment at 81–101 (VFGGITWAITNHFTTWLGTIL) threads the bilayer. Residues 102–127 (SMFYLFKIANFSNSLFLHLKRKLDNV) are Cytoplasmic-facing. Residues 128 to 148 (LLVIFLGSSLFLVAYLGMVNI) form a helical membrane-spanning segment. At 149 to 177 (KKIAWMSIHEGNVTTKSKLKHVTSITNML) the chain is on the extracellular side. Residue asparagine 160 is glycosylated (N-linked (GlcNAc...) asparagine). A helical transmembrane segment spans residues 178–198 (LFSLINIVPFGISLNCVLLLI). The Cytoplasmic portion of the chain corresponds to 199-228 (YSLSKHLKNMKFYGKGCQDQSTMVHIKALQ). The helical transmembrane segment at 229 to 249 (TVVSFLLLYATYSSCVIISGW) threads the bilayer. Topologically, residues 250–255 (SLQNAP) are extracellular. Residues 256 to 276 (VFLFCVTIGSFYPAGHSCILI) traverse the membrane as a helical segment. The Cytoplasmic portion of the chain corresponds to 277-295 (WGNQKLKQVFLLLLRQMRC).

This sequence belongs to the G-protein coupled receptor T2R family.

It is found in the membrane. In terms of biological role, putative taste receptor which may play a role in the perception of bitterness. The polypeptide is Taste receptor type 2 member 120 (Mus musculus (Mouse)).